A 127-amino-acid polypeptide reads, in one-letter code: Small ribosomal subunit protein uS13 (127 aa).

The interval 90-127 (KRHREGLPVNGQRTRTNARTRKGKRKTVAGRSQSTQKK) is disordered. Positions 105-117 (TNARTRKGKRKTV) are enriched in basic residues.

It belongs to the universal ribosomal protein uS13 family. Part of the 30S ribosomal subunit. Forms a loose heterodimer with protein S19. Forms two bridges to the 50S subunit in the 70S ribosome.

In terms of biological role, located at the top of the head of the 30S subunit, it contacts several helices of the 16S rRNA. In the 70S ribosome it contacts the 23S rRNA (bridge B1a) and protein L5 of the 50S subunit (bridge B1b), connecting the 2 subunits; these bridges are implicated in subunit movement. Contacts the tRNAs in the A and P-sites. This Salinibacter ruber (strain DSM 13855 / M31) protein is Small ribosomal subunit protein uS13.